A 239-amino-acid chain; its full sequence is 1-(5-phosphoribosyl)-5-[(5-phosphoribosylamino)methylideneamino] imidazole-4-carboxamide isomerase (239 aa).

The active-site Proton acceptor is the aspartate 8. Aspartate 129 functions as the Proton donor in the catalytic mechanism.

Belongs to the HisA/HisF family.

Its subcellular location is the cytoplasm. The enzyme catalyses 1-(5-phospho-beta-D-ribosyl)-5-[(5-phospho-beta-D-ribosylamino)methylideneamino]imidazole-4-carboxamide = 5-[(5-phospho-1-deoxy-D-ribulos-1-ylimino)methylamino]-1-(5-phospho-beta-D-ribosyl)imidazole-4-carboxamide. It functions in the pathway amino-acid biosynthesis; L-histidine biosynthesis; L-histidine from 5-phospho-alpha-D-ribose 1-diphosphate: step 4/9. This Legionella pneumophila (strain Lens) protein is 1-(5-phosphoribosyl)-5-[(5-phosphoribosylamino)methylideneamino] imidazole-4-carboxamide isomerase.